The primary structure comprises 427 residues: Trigger factor (427 aa).

The region spanning 163-248 is the PPIase FKBP-type domain; the sequence is GDTVVIDFVG…VHEVKAKEVP (86 aa).

The protein belongs to the FKBP-type PPIase family. Tig subfamily.

Its subcellular location is the cytoplasm. It catalyses the reaction [protein]-peptidylproline (omega=180) = [protein]-peptidylproline (omega=0). In terms of biological role, involved in protein export. Acts as a chaperone by maintaining the newly synthesized protein in an open conformation. Functions as a peptidyl-prolyl cis-trans isomerase. The protein is Trigger factor of Streptococcus equi subsp. zooepidemicus (strain H70).